Reading from the N-terminus, the 553-residue chain is Transcriptional regulator HilA (553 aa).

Positions 11-107 form a DNA-binding region, ompR/PhoB-type; sequence NKKFVFDDFI…LYGQGYRFNR (97 aa). At aspartate 62 the chain carries 4-aspartylphosphate. Residues 372 to 405 form a TPR repeat; sequence ADIKYYYGWNLFMAGQLEEALQTINECLKLDPTR.

Functionally, the main transcriptional regulator of the Salmonella pathogenicity island 1 (SPI1) gene expression. Activates the expression of invasion genes by a direct action at their promoters and also indirectly by increasing the level of invF. Also binds upstream of prgH and directly activates the expression of prgHIJK operon. The polypeptide is Transcriptional regulator HilA (hilA) (Salmonella paratyphi A (strain ATCC 9150 / SARB42)).